Reading from the N-terminus, the 379-residue chain is UDP-N-acetylglucosamine--N-acetylmuramyl-(pentapeptide) pyrophosphoryl-undecaprenol N-acetylglucosamine transferase (379 aa).

UDP-N-acetyl-alpha-D-glucosamine contacts are provided by residues 13 to 15 (TGG), N123, R166, S194, and Q295.

The protein belongs to the glycosyltransferase 28 family. MurG subfamily.

It localises to the cell inner membrane. It carries out the reaction di-trans,octa-cis-undecaprenyl diphospho-N-acetyl-alpha-D-muramoyl-L-alanyl-D-glutamyl-meso-2,6-diaminopimeloyl-D-alanyl-D-alanine + UDP-N-acetyl-alpha-D-glucosamine = di-trans,octa-cis-undecaprenyl diphospho-[N-acetyl-alpha-D-glucosaminyl-(1-&gt;4)]-N-acetyl-alpha-D-muramoyl-L-alanyl-D-glutamyl-meso-2,6-diaminopimeloyl-D-alanyl-D-alanine + UDP + H(+). The protein operates within cell wall biogenesis; peptidoglycan biosynthesis. Functionally, cell wall formation. Catalyzes the transfer of a GlcNAc subunit on undecaprenyl-pyrophosphoryl-MurNAc-pentapeptide (lipid intermediate I) to form undecaprenyl-pyrophosphoryl-MurNAc-(pentapeptide)GlcNAc (lipid intermediate II). The chain is UDP-N-acetylglucosamine--N-acetylmuramyl-(pentapeptide) pyrophosphoryl-undecaprenol N-acetylglucosamine transferase from Rhodospirillum centenum (strain ATCC 51521 / SW).